Here is a 228-residue protein sequence, read N- to C-terminus: Urease accessory protein UreF (228 aa).

Belongs to the UreF family. UreD, UreF and UreG form a complex that acts as a GTP-hydrolysis-dependent molecular chaperone, activating the urease apoprotein by helping to assemble the nickel containing metallocenter of UreC. The UreE protein probably delivers the nickel.

The protein resides in the cytoplasm. Functionally, required for maturation of urease via the functional incorporation of the urease nickel metallocenter. This Yersinia pestis bv. Antiqua (strain Antiqua) protein is Urease accessory protein UreF.